A 154-amino-acid chain; its full sequence is MQKQIEIFTDGSCLGNPGPGGIGVLLRYKQHEKQISAGYFLTTNNRMELRAVIEALNTLKEPCSVTLHSDSQYMKNGITKWIFNWKKNNWKASTGKPVKNQDLWIQLDQAIQRHHINWQWVKGHSGHIENEICDQLAKAGAENPTLQDVGYQPE.

Residues 1–142 form the RNase H type-1 domain; it reads MQKQIEIFTD…CDQLAKAGAE (142 aa). Mg(2+)-binding residues include Asp-10, Glu-48, Asp-70, and Asp-134.

The protein belongs to the RNase H family. In terms of assembly, monomer. Mg(2+) serves as cofactor.

It is found in the cytoplasm. It catalyses the reaction Endonucleolytic cleavage to 5'-phosphomonoester.. Its function is as follows. Endonuclease that specifically degrades the RNA of RNA-DNA hybrids. The polypeptide is Ribonuclease HI (rnhA) (Pasteurella multocida (strain Pm70)).